A 418-amino-acid polypeptide reads, in one-letter code: Gamma-glutamyl phosphate reductase (418 aa).

The protein belongs to the gamma-glutamyl phosphate reductase family.

It is found in the cytoplasm. It catalyses the reaction L-glutamate 5-semialdehyde + phosphate + NADP(+) = L-glutamyl 5-phosphate + NADPH + H(+). The protein operates within amino-acid biosynthesis; L-proline biosynthesis; L-glutamate 5-semialdehyde from L-glutamate: step 2/2. In terms of biological role, catalyzes the NADPH-dependent reduction of L-glutamate 5-phosphate into L-glutamate 5-semialdehyde and phosphate. The product spontaneously undergoes cyclization to form 1-pyrroline-5-carboxylate. The chain is Gamma-glutamyl phosphate reductase from Geobacter sulfurreducens (strain ATCC 51573 / DSM 12127 / PCA).